The primary structure comprises 339 residues: UDP-N-acetylglucosamine--N-acetylmuramyl-(pentapeptide) pyrophosphoryl-undecaprenol N-acetylglucosamine transferase (339 aa).

Residues 10 to 12 (TGG), N124, R168, S188, I235, and Q280 each bind UDP-N-acetyl-alpha-D-glucosamine.

The protein belongs to the glycosyltransferase 28 family. MurG subfamily.

Its subcellular location is the cell inner membrane. It carries out the reaction di-trans,octa-cis-undecaprenyl diphospho-N-acetyl-alpha-D-muramoyl-L-alanyl-D-glutamyl-meso-2,6-diaminopimeloyl-D-alanyl-D-alanine + UDP-N-acetyl-alpha-D-glucosamine = di-trans,octa-cis-undecaprenyl diphospho-[N-acetyl-alpha-D-glucosaminyl-(1-&gt;4)]-N-acetyl-alpha-D-muramoyl-L-alanyl-D-glutamyl-meso-2,6-diaminopimeloyl-D-alanyl-D-alanine + UDP + H(+). It functions in the pathway cell wall biogenesis; peptidoglycan biosynthesis. Its function is as follows. Cell wall formation. Catalyzes the transfer of a GlcNAc subunit on undecaprenyl-pyrophosphoryl-MurNAc-pentapeptide (lipid intermediate I) to form undecaprenyl-pyrophosphoryl-MurNAc-(pentapeptide)GlcNAc (lipid intermediate II). The chain is UDP-N-acetylglucosamine--N-acetylmuramyl-(pentapeptide) pyrophosphoryl-undecaprenol N-acetylglucosamine transferase from Pseudothermotoga lettingae (strain ATCC BAA-301 / DSM 14385 / NBRC 107922 / TMO) (Thermotoga lettingae).